We begin with the raw amino-acid sequence, 213 residues long: Protein HSH49 (213 aa).

2 RRM domains span residues 9-88 (NTVY…QVTN) and 108-185 (AKLF…YAFK).

As to quaternary structure, interacts with RDS3.

It is found in the nucleus. Its function is as follows. Possible SF3b-like factor. This Saccharomyces cerevisiae (strain ATCC 204508 / S288c) (Baker's yeast) protein is Protein HSH49 (HSH49).